The chain runs to 284 residues: Cuticle collagen dpy-5 (284 aa).

Residues 88–284 form a disordered region; it reads GLPSQGCPAG…PCPERKRRRV (197 aa). Triple-helical region stretches follow at residues 94-126 and 143-270; these read CPAGAPGNPGAPGEPGGTGPDGKNGPTGLPGLN and GPPG…VGAD. Residues 106 to 115 are compositionally biased toward gly residues; the sequence is GEPGGTGPDG. Over residues 163-177 the composition is skewed to basic and acidic residues; that stretch reads AGKRGTPGKDGEPGR. Composition is skewed to low complexity over residues 181–193, 224–246, and 255–271; these read IGDQGTPGQDGQP, EPGNNGNPGEEGQTGAQGPTGQP, and DGTPGQAGPQGAVGADA.

Belongs to the cuticular collagen family. In terms of assembly, collagen polypeptide chains are complexed within the cuticle by disulfide bonds and other types of covalent cross-links. In terms of processing, may be a substrate of bli-4.

In terms of biological role, nematode cuticles are composed largely of collagen-like proteins. The cuticle functions both as an exoskeleton and as a barrier to protect the worm from its environment. This is Cuticle collagen dpy-5 (dpy-5) from Caenorhabditis elegans.